The chain runs to 553 residues: Keratin, type II cytoskeletal 73 (553 aa).

Residues 1–130 (MNRQFTCKSG…DPEIQKVRAQ (130 aa)) are head. Residues 131–166 (EREQIKALNNKFASFIDKVRFLEQQNQVLQTKWELL) form a coil 1A region. Residues 131 to 444 (EREQIKALNN…KLLEGEECRM (314 aa)) form the IF rod domain. The linker 1 stretch occupies residues 167–185 (QQLDLSNCRRNLEPVYEAH). Residues 186–277 (ISSLQKQLDS…CLYEGEITQM (92 aa)) are coil 1B. The linker 12 stretch occupies residues 278 to 301 (QSHISDTSVVLSMDNNRNLDLDSI). Positions 302–440 (IAEVRAQYED…ATYRKLLEGE (139 aa)) are coil 2. Positions 441–539 (ECRMSGEHTN…LGSPSKKTMR (99 aa)) are tail.

The protein belongs to the intermediate filament family. As to quaternary structure, heterotetramer of two type I and two type II keratins.

Functionally, has a role in hair formation. Specific component of keratin intermediate filaments in the inner root sheath (IRS) of the hair follicle. The polypeptide is Keratin, type II cytoskeletal 73 (Krt73) (Rattus norvegicus (Rat)).